Reading from the N-terminus, the 429-residue chain is Histidine--tRNA ligase (429 aa).

The protein belongs to the class-II aminoacyl-tRNA synthetase family. In terms of assembly, homodimer.

Its subcellular location is the cytoplasm. The catalysed reaction is tRNA(His) + L-histidine + ATP = L-histidyl-tRNA(His) + AMP + diphosphate + H(+). In Pseudomonas paraeruginosa (strain DSM 24068 / PA7) (Pseudomonas aeruginosa (strain PA7)), this protein is Histidine--tRNA ligase.